A 789-amino-acid polypeptide reads, in one-letter code: Probable phosphoketolase (789 aa).

The protein belongs to the XFP family. Requires thiamine diphosphate as cofactor.

The sequence is that of Probable phosphoketolase from Brucella abortus (strain 2308).